We begin with the raw amino-acid sequence, 255 residues long: Aquaporin TIP4-1 (255 aa).

A run of 2 helical transmembrane segments spans residues 25 to 45 (AVLA…SAAM) and 61 to 81 (TLAA…TAGF). Positions 89-91 (NPA) match the NPA 1 motif. The next 3 membrane-spanning stretches (helical) occupy residues 108-128 (VLYV…LRFL), 148-168 (GLVM…AMIL), and 176-196 (AIGP…GGNF). The NPA 2 motif lies at 202–204 (NPA). The helical transmembrane segment at 223-243 (WIGPLLGGPLAGFVYESLFLV) threads the bilayer.

The protein belongs to the MIP/aquaporin (TC 1.A.8) family. TIP (TC 1.A.8.10) subfamily.

It is found in the vacuole membrane. Aquaporins facilitate the transport of water and small neutral solutes across cell membranes. The protein is Aquaporin TIP4-1 (TIP4-1) of Zea mays (Maize).